A 446-amino-acid chain; its full sequence is Probable D-serine dehydratase (446 aa).

Lys-116 bears the N6-(pyridoxal phosphate)lysine mark.

The protein belongs to the serine/threonine dehydratase family. DsdA subfamily. Pyridoxal 5'-phosphate serves as cofactor.

The enzyme catalyses D-serine = pyruvate + NH4(+). In Bacillus thuringiensis subsp. konkukian (strain 97-27), this protein is Probable D-serine dehydratase.